The primary structure comprises 692 residues: Single-strand DNA endonuclease ASTE1 (692 aa).

It belongs to the asteroid family.

Functionally, structure-specific DNA endonuclease that specifically cleaves single-stranded DNA and 3' overhang DNA. This Danio rerio (Zebrafish) protein is Single-strand DNA endonuclease ASTE1 (aste1a).